A 469-amino-acid chain; its full sequence is Endoplasmic reticulum oxidoreductin-1 (469 aa).

An N-terminal signal peptide occupies residues 1 to 36; that stretch reads MGKGAIKEEESEKKRKTWRWPLATLVVVFLAVAVSS. 6 disulfide bridges follow: Cys52/Cys71, Cys54/Cys69, Cys108/Cys372, Cys117/Cys122, Cys222/Cys231, and Cys375/Cys378. Residues Arg201, Thr203, and Trp214 each contribute to the FAD site. FAD is bound by residues Ser242, His245, Arg275, and Arg282. The N-linked (GlcNAc...) asparagine glycan is linked to Asn365.

The protein belongs to the EROs family. In terms of assembly, may function both as a monomer and a homodimer. The cofactor is FAD. Post-translationally, N-glycosylated.

The protein resides in the endoplasmic reticulum membrane. Its function is as follows. Essential oxidoreductase that oxidizes proteins in the endoplasmic reticulum to produce disulfide bonds. Acts by oxidizing directly PDI isomerase through a direct disulfide exchange. Does not act as a direct oxidant of folding substrate, but relies on PDI to transfer oxidizing equivalent. Does not oxidize all PDI related proteins, suggesting that it can discriminate between PDI and related proteins. Its reoxidation probably involves electron transfer to molecular oxygen via FAD. Acts independently of glutathione. May be responsible for a significant proportion of reactive oxygen species (ROS) in the cell, thereby being a source of oxidative stress. The polypeptide is Endoplasmic reticulum oxidoreductin-1 (AERO1) (Arabidopsis thaliana (Mouse-ear cress)).